The chain runs to 84 residues: Large ribosomal subunit protein bL27 (84 aa).

Belongs to the bacterial ribosomal protein bL27 family.

This chain is Large ribosomal subunit protein bL27, found in Salinispora tropica (strain ATCC BAA-916 / DSM 44818 / JCM 13857 / NBRC 105044 / CNB-440).